The following is a 231-amino-acid chain: 7-cyano-7-deazaguanine synthase (231 aa).

8 to 18 (FSGGQDSTTCL) serves as a coordination point for ATP. Zn(2+) contacts are provided by cysteine 187, cysteine 196, cysteine 199, and cysteine 202.

Belongs to the QueC family. The cofactor is Zn(2+).

It catalyses the reaction 7-carboxy-7-deazaguanine + NH4(+) + ATP = 7-cyano-7-deazaguanine + ADP + phosphate + H2O + H(+). It functions in the pathway purine metabolism; 7-cyano-7-deazaguanine biosynthesis. Functionally, catalyzes the ATP-dependent conversion of 7-carboxy-7-deazaguanine (CDG) to 7-cyano-7-deazaguanine (preQ(0)). The polypeptide is 7-cyano-7-deazaguanine synthase (Vibrio cholerae serotype O1 (strain ATCC 39541 / Classical Ogawa 395 / O395)).